Here is a 524-residue protein sequence, read N- to C-terminus: Cytochrome P450 monooxygenase patH (524 aa).

Over 1 to 4 the chain is Cytoplasmic; the sequence is MEPM. Residues 5–23 traverse the membrane as a helical segment; the sequence is LLLILVAAVVLLFVRWAFV. Residues 24–524 are Lumenal-facing; that stretch reads YGHRTSNMPK…KEVFSQFTEG (501 aa). An N-linked (GlcNAc...) asparagine glycan is attached at N191. A heme-binding site is contributed by C442. Residue N499 is glycosylated (N-linked (GlcNAc...) asparagine).

Belongs to the cytochrome P450 family. The cofactor is heme.

The protein localises to the endoplasmic reticulum membrane. The catalysed reaction is 3-methylphenol + reduced [NADPH--hemoprotein reductase] + O2 = 3-hydroxybenzyl alcohol + oxidized [NADPH--hemoprotein reductase] + H2O + H(+). Its pathway is mycotoxin biosynthesis; patulin biosynthesis. Functionally, cytochrome P450 monooxygenase; part of the gene cluster that mediates the biosynthesis of patulin, an acetate-derived tetraketide mycotoxin produced by several fungal species that shows antimicrobial properties against several bacteria. PatH catalyzes the conversion of m-cresol into m-hydroxybenzyl alcohol. The pathway begins with the synthesis of 6-methylsalicylic acid by the polyketide synthase (PKS) patK via condensation of acetate and malonate units. The 6-methylsalicylic acid decarboxylase patG then catalyzes the decarboxylation of 6-methylsalicylic acid to yield m-cresol (also known as 3-methylphenol). These first reactions occur in the cytosol. The intermediate m-cresol is then transported into the endoplasmic reticulum where the cytochrome P450 monooxygenase patH converts it to m-hydroxybenzyl alcohol, which is further converted to gentisyl alcohol by the cytochrome P450 monooxygenase patI. The oxidoreductases patJ and patO further convert gentisyl alcohol to isoepoxydon in the vacuole. PatN catalyzes then the transformation of isoepoxydon into phyllostine. The cluster protein patF is responsible for the conversion from phyllostine to neopatulin whereas the alcohol dehydrogenase patD converts neopatulin to E-ascladiol. The steps between isoepoxydon and E-ascladiol occur in the cytosol, and E-ascladiol is probably secreted to the extracellular space by one of the cluster-specific transporters patC or patM. Finally, the secreted patulin synthase patE catalyzes the conversion of E-ascladiol to patulin. In Aspergillus clavatus (strain ATCC 1007 / CBS 513.65 / DSM 816 / NCTC 3887 / NRRL 1 / QM 1276 / 107), this protein is Cytochrome P450 monooxygenase patH.